The primary structure comprises 404 residues: Mitochondrial potassium channel (404 aa).

Residues 1-30 (MTGRSRVLAMRHVGGVSPVLVRRDLFLTRT) constitute a mitochondrion transit peptide. The Mitochondrial matrix portion of the chain corresponds to 31–196 (LCSHGPSQPR…KERTRAERTK (166 aa)). Residue Ser65 is modified to Phosphoserine. The stretch at 111–138 (VREAREDLESQQTKLKEVRDRLDRISRD) forms a coiled coil. The chain crosses the membrane as a helical span at residues 197–217 (NWSLIGSVLGALIGVAGSTYV). Residues 218-380 (NRVRLQELKA…LEAQVNRNTV (163 aa)) are Mitochondrial intermembrane-facing. A helical transmembrane segment spans residues 381–401 (YGTLVTCATFVAVLPVLYMLF). Residues 402-404 (RAS) lie on the Mitochondrial matrix side of the membrane.

As to quaternary structure, the mitochondrial potassium channel (mitoK(ATP)) forms a heteromultimer.

It localises to the mitochondrion inner membrane. The catalysed reaction is K(+)(in) = K(+)(out). Channel activity inhibited by ATP via ABCB8/MITOSUR subunit. In terms of biological role, pore-forming subunit of the mitochondrial ATP-gated potassium channel (mitoK(ATP)). Together with ATP-binding subunit ABCB8/MITOSUR of the mitoK(ATP) channel, mediates ATP-dependent K(+) currents across the mitochondrial inner membrane. An increase in ATP intracellular levels closes the channel, inhibiting K(+) transport, whereas a decrease in ATP levels enhances K(+) uptake in the mitochondrial matrix. May contribute to the homeostatic control of cellular metabolism under stress conditions by regulating the mitochondrial matrix volume. The protein is Mitochondrial potassium channel of Bos taurus (Bovine).